The chain runs to 382 residues: Chaperone protein DnaJ (382 aa).

Positions 5–69 constitute a J domain; it reads DLYGVLGVAK…QKRANYDQSG (65 aa). Positions 104–123 are disordered; that stretch reads QFFGGGGGQRNPNAPRPGRD. The segment at 138 to 220 adopts a CR-type zinc-finger fold; that stretch reads GKKTKIKYNR…CGGSGHEEER (83 aa). Cys-151, Cys-154, Cys-168, Cys-171, Cys-194, Cys-197, Cys-208, and Cys-211 together coordinate Zn(2+). CXXCXGXG motif repeat units lie at residues 151–158, 168–175, 194–201, and 208–215; these read CHTCGGNG, CHQCGGSG, CPVCHGTG, and CPTCGGSG. The disordered stretch occupies residues 358–382; that stretch reads ASGESVTGSGKGNLFNKMRDKFNEN.

Belongs to the DnaJ family. As to quaternary structure, homodimer. Zn(2+) serves as cofactor.

It is found in the cytoplasm. Its function is as follows. Participates actively in the response to hyperosmotic and heat shock by preventing the aggregation of stress-denatured proteins and by disaggregating proteins, also in an autonomous, DnaK-independent fashion. Unfolded proteins bind initially to DnaJ; upon interaction with the DnaJ-bound protein, DnaK hydrolyzes its bound ATP, resulting in the formation of a stable complex. GrpE releases ADP from DnaK; ATP binding to DnaK triggers the release of the substrate protein, thus completing the reaction cycle. Several rounds of ATP-dependent interactions between DnaJ, DnaK and GrpE are required for fully efficient folding. Also involved, together with DnaK and GrpE, in the DNA replication of plasmids through activation of initiation proteins. The protein is Chaperone protein DnaJ of Levilactobacillus brevis (strain ATCC 367 / BCRC 12310 / CIP 105137 / JCM 1170 / LMG 11437 / NCIMB 947 / NCTC 947) (Lactobacillus brevis).